The following is a 35-amino-acid chain: Tamulustoxin (35 aa).

3 disulfides stabilise this stretch: Cys2-Cys22, Cys7-Cys31, and Cys11-Cys33.

In terms of tissue distribution, expressed by the venom gland.

It localises to the secreted. Its function is as follows. Blocks Kv1.6/KCNA6 potassium channels. The sequence is that of Tamulustoxin from Hottentotta tamulus (Eastern Indian scorpion).